Here is a 368-residue protein sequence, read N- to C-terminus: Alanine racemase (368 aa).

K40 acts as the Proton acceptor; specific for D-alanine in catalysis. K40 carries the post-translational modification N6-(pyridoxal phosphate)lysine. Residue R134 coordinates substrate. Catalysis depends on Y263, which acts as the Proton acceptor; specific for L-alanine. M310 is a substrate binding site.

Belongs to the alanine racemase family. Requires pyridoxal 5'-phosphate as cofactor.

It carries out the reaction L-alanine = D-alanine. It participates in amino-acid biosynthesis; D-alanine biosynthesis; D-alanine from L-alanine: step 1/1. Its function is as follows. Catalyzes the interconversion of L-alanine and D-alanine. May also act on other amino acids. The polypeptide is Alanine racemase (alr) (Listeria monocytogenes serotype 4a (strain HCC23)).